Reading from the N-terminus, the 258-residue chain is MAKRIDISGLSAFYGNHKAIEDISMTVEPRSVTAFIGPSGCGKSTFLRTLNRMHEVTPGGRVEGKVLLDDENLYDSNVDPVTVRRTVGMVFQRPNPFPTMSIFDNVAAGLRLNGSYRKSELNDVVEKSLRGANLWNEVKDRLNKPGSGLSGGQQQRLCIARAIAVEPQVLLMDEPCSALDPISTLAIEDLIGELKERFTIVIVTHNMQQAARVSDRTAFFNLAAVGKPGRLIEIDETERIFSNPSVQATEDYISGRFG.

Residues isoleucine 5–glutamine 247 form the ABC transporter domain. ATP is bound at residue glycine 37–serine 44.

It belongs to the ABC transporter superfamily. Phosphate importer (TC 3.A.1.7) family. As to quaternary structure, the complex is composed of two ATP-binding proteins (PstB), two transmembrane proteins (PstC and PstA) and a solute-binding protein (PstS).

Its subcellular location is the cell membrane. The catalysed reaction is phosphate(out) + ATP + H2O = ADP + 2 phosphate(in) + H(+). Part of the ABC transporter complex PstSACB involved in phosphate import. Responsible for energy coupling to the transport system. This Streptomyces griseus protein is Phosphate import ATP-binding protein PstB.